Here is a 141-residue protein sequence, read N- to C-terminus: MEQTLSIIKPDSVGKAHIGEIVAIFEKSGFRIAAMKMVHLSVKEAEGFYAVHKSRPFFQELVDFMISGPVVVMVLEGDNAVVRNREIMGATNPQEAAQGTIRAQFGESIGINAVHGSDSLENAAIEINYFFSKIEIVNSAK.

ATP contacts are provided by Lys9, Phe57, Arg85, Thr91, Arg102, and Asn112. His115 functions as the Pros-phosphohistidine intermediate in the catalytic mechanism.

Belongs to the NDK family. As to quaternary structure, homotetramer. Mg(2+) serves as cofactor.

Its subcellular location is the cytoplasm. The enzyme catalyses a 2'-deoxyribonucleoside 5'-diphosphate + ATP = a 2'-deoxyribonucleoside 5'-triphosphate + ADP. It catalyses the reaction a ribonucleoside 5'-diphosphate + ATP = a ribonucleoside 5'-triphosphate + ADP. Its function is as follows. Major role in the synthesis of nucleoside triphosphates other than ATP. The ATP gamma phosphate is transferred to the NDP beta phosphate via a ping-pong mechanism, using a phosphorylated active-site intermediate. The protein is Nucleoside diphosphate kinase of Chlamydia caviae (strain ATCC VR-813 / DSM 19441 / 03DC25 / GPIC) (Chlamydophila caviae).